A 211-amino-acid chain; its full sequence is DNA dC-&gt;dU-editing enzyme APOBEC-3H (211 aa).

The 123-residue stretch at 4–126 (LTAKTFSLQF…RRQQEGLRLL (123 aa)) folds into the CMP/dCMP-type deaminase domain. Histidine 54 contacts Zn(2+). Glutamate 56 serves as the catalytic Proton donor. Zn(2+) is bound by residues cysteine 85 and cysteine 88.

This sequence belongs to the cytidine and deoxycytidylate deaminase family. As to quaternary structure, homodimer. Requires Zn(2+) as cofactor.

Its subcellular location is the cytoplasm. The enzyme catalyses a 2'-deoxycytidine in single-stranded DNA + H2O + H(+) = a 2'-deoxyuridine in single-stranded DNA + NH4(+). In terms of biological role, DNA deaminase (cytidine deaminase) which may act as an inhibitor of retrovirus replication and retrotransposon mobility via deaminase-dependent and -independent mechanisms. The polypeptide is DNA dC-&gt;dU-editing enzyme APOBEC-3H (Pongo pygmaeus (Bornean orangutan)).